Reading from the N-terminus, the 214-residue chain is Alkaline phosphatase-like protein (214 aa).

Transmembrane regions (helical) follow at residues 48–68 (LGII…ALIL), 141–161 (FLIL…CLGA), and 177–197 (YSSV…LIFV).

This sequence belongs to the DedA family.

It is found in the cell membrane. The sequence is that of Alkaline phosphatase-like protein (apl) from Lactococcus lactis subsp. lactis (strain IL1403) (Streptococcus lactis).